A 509-amino-acid polypeptide reads, in one-letter code: Anaerobic nitric oxide reductase flavorubredoxin (509 aa).

Residues 30-210 (LQGSSYNSYL…PFSRLVTAKI (181 aa)) form a zinc metallo-hydrolase region. Histidine 79, glutamate 81, aspartate 83, histidine 147, aspartate 166, and histidine 227 together coordinate Fe cation. The region spanning 254-393 (ITLFYDTMSN…VCREHGREIA (140 aa)) is the Flavodoxin-like domain. FMN contacts are provided by residues 260 to 264 (TMSNN) and 342 to 369 (AFGS…ETTL). Residues 457–508 (SGCMQCSVCQWIYDPALGEPMQDVTPGTMWSDVPDSFLCPECGLGKDVFNPI) enclose the Rubredoxin-like domain. Residues cysteine 462, cysteine 465, cysteine 495, and cysteine 498 each coordinate Fe cation.

This sequence in the N-terminal section; belongs to the zinc metallo-hydrolase group 3 family. Homotetramer. Fe cation is required as a cofactor. FMN serves as cofactor.

Its subcellular location is the cytoplasm. It functions in the pathway nitrogen metabolism; nitric oxide reduction. Functionally, anaerobic nitric oxide reductase; uses NADH to detoxify nitric oxide (NO), protecting several 4Fe-4S NO-sensitive enzymes. Has at least 2 reductase partners, only one of which (NorW, flavorubredoxin reductase) has been identified. NO probably binds to the di-iron center; electrons enter from the NorW at rubredoxin and are transferred sequentially to the FMN center and the di-iron center. Also able to function as an aerobic oxygen reductase. The chain is Anaerobic nitric oxide reductase flavorubredoxin from Pectobacterium atrosepticum (strain SCRI 1043 / ATCC BAA-672) (Erwinia carotovora subsp. atroseptica).